The primary structure comprises 152 residues: MDKTDVKLLKLVQDGIPITHSPFKGFASELGISEQEVVDRLKNLQKAGKIRRFAASIGHRAIGITANAMCVWNVPDEQIETVGNIMAEFPEVTHCYERPRYPDWPYNLFTMVHSYTPEDCEKVAVRISEATGIRDYTLFFSEREFKKTGVRL.

This sequence belongs to the Ahb/Nir family. In terms of assembly, forms a heterodimer composed of AhbA and AhbB.

The enzyme catalyses siroheme + 2 H(+) = 12,18-didecarboxysiroheme + 2 CO2. Its pathway is porphyrin-containing compound metabolism; protoheme biosynthesis. Binds heme b. The redox state of the heme b modulates the activity of the enzyme. Activity is stimulated by sodium dithionite. Functionally, involved in siroheme-dependent heme b biosynthesis. Catalyzes the decarboxylation of siroheme into didecarboxysiroheme. The chain is Siroheme decarboxylase beta subunit from Methanosarcina barkeri (strain Fusaro / DSM 804).